We begin with the raw amino-acid sequence, 290 residues long: Chloride intracellular channel exc-4 (290 aa).

The chain crosses the membrane as a helical span at residues 37–57 (LFCQEFWMELYALYEIGVARV).

It belongs to the chloride channel CLIC family. Monomer. In terms of tissue distribution, expressed in the secretory system, hypodermis, vulva, pharyngeal muscle, rectal gland, tubular rectal epithelium cells, and tubular neuronal support cells in the head and tail.

The protein resides in the cytoplasm. The protein localises to the membrane. In terms of biological role, may insert into membranes and form chloride ion channels. Involved in the formation of the excretory canal. Required to prevent cystic lumenal expansions in the excretory cell. Not required for formation of the initial tube, but is required for regulating the size of the tube lumen as it grows. This is Chloride intracellular channel exc-4 (exc-4) from Caenorhabditis elegans.